Here is a 265-residue protein sequence, read N- to C-terminus: Undecaprenyl-diphosphatase (265 aa).

Helical transmembrane passes span glycine 15–tyrosine 37, lysine 41–tyrosine 61, tyrosine 85–isoleucine 105, leucine 109–valine 129, valine 144–phenylalanine 164, leucine 183–aspartate 203, phenylalanine 218–isoleucine 238, and valine 244–tryptophan 264.

Belongs to the UppP family.

The protein resides in the cell inner membrane. It carries out the reaction di-trans,octa-cis-undecaprenyl diphosphate + H2O = di-trans,octa-cis-undecaprenyl phosphate + phosphate + H(+). In terms of biological role, catalyzes the dephosphorylation of undecaprenyl diphosphate (UPP). Confers resistance to bacitracin. This chain is Undecaprenyl-diphosphatase, found in Oleidesulfovibrio alaskensis (strain ATCC BAA-1058 / DSM 17464 / G20) (Desulfovibrio alaskensis).